The following is a 41-amino-acid chain: Large ribosomal subunit protein bL36 (41 aa).

It belongs to the bacterial ribosomal protein bL36 family.

This is Large ribosomal subunit protein bL36 from Dinoroseobacter shibae (strain DSM 16493 / NCIMB 14021 / DFL 12).